An 80-amino-acid polypeptide reads, in one-letter code: Nuclear protein 1 (80 aa).

A disordered region spans residues 40–80 (GGRKGRTKREAAANTNRPSPGGHERKLLTKFQNSERKKAWR). Basic and acidic residues predominate over residues 61–80 (GHERKLLTKFQNSERKKAWR). Positions 64-80 (RKLLTKFQNSERKKAWR) match the Nuclear localization signal motif.

This sequence belongs to the NUPR family. As to quaternary structure, monomer. Directly interacts with MSL1 and binds MORF4L1, two components of histone acetyltransferase complex; the interaction with MORF4L1 may be mediated by MSL1. Interacts with EP300; this interaction enhances the effect of EP300 on PAX2 transcription factor activity. Interacts with PAXIP1; this interaction prevents PAXIP1 inhibition of PAX2 transcription factor activity. Interacts with COPS5; this interaction allows COPS5-dependent CDKN1B nuclear to cytoplasm translocation. Interacts with RNF2. Interacts with FOXO3; this interaction represses FOXO3 transactivation. Interacts with PTMA; regulates apoptotic process. Interacts with MYOD1, EP300 and DDX5; this interaction coordinates the association of anti-proliferative and pro-myogenic proteins at the myogenin promoter. Interacts with TP53; interaction is stress-dependent. Forms a complex with EP300 and TP53; this complex binds CDKN1A promoter leading to transcriptional induction of CDKN1A. In terms of processing, phosphorylated. Phosphorylation promotes DNA-binding activity. Acetylated. Strongly activated in pancreatic acinar cells during the acute phase of pancreatitis, in developing pancreas and during pancreatic regeneration.

It localises to the nucleus. It is found in the cytoplasm. The protein resides in the perinuclear region. Transcription regulator that converts stress signals into a program of gene expression that empowers cells with resistance to the stress induced by a change in their microenvironment. Thereby participates in the regulation of many processes namely cell-cycle, apoptosis, autophagy and DNA repair responses. Controls cell cycle progression and protects cells from genotoxic stress induced by doxorubicin through the complex formation with TP53 and EP300 that binds CDKN1A promoter leading to transcriptional induction of CDKN1A. Protects pancreatic cancer cells from stress-induced cell death by binding the RELB promoter and activating its transcription, leading to IER3 transactivation. Negatively regulates apoptosis through interaction with PTMA. Inhibits autophagy-induced apoptosis in cardiac cells through FOXO3 interaction, inducing cytoplasmic translocation of FOXO3 thereby preventing the FOXO3 association with the pro-autophagic BNIP3 promoter. Inhibits cell growth and facilitates programmed cell death by apoptosis after adriamycin-induced DNA damage through transactivation of TP53. Regulates methamphetamine-induced apoptosis and autophagy through DDIT3-mediated endoplasmic reticulum stress pathway. Participates in DNA repair following gamma-irradiation by facilitating DNA access of the transcription machinery through interaction with MSL1 leading to inhibition of histone H4' Lys-16' acetylation (H4K16ac). Coactivator of PAX2 transcription factor activity, both by recruiting the EP300 cofactor to increase PAX2 transcription factor activity and by binding PAXIP1 to suppress PAXIP1-induced inhibition on PAX2. Positively regulates cell cycle progression through interaction with COPS5 inducing cytoplasmic translocation of CDKN1B leading to the CDKN1B degradation. Coordinates, through its interaction with EP300, the assiociation of MYOD1, EP300 and DDX5 to the MYOG promoter, leading to inhibition of cell-cycle progression and myogenic differentiation promotion. Negatively regulates beta cell proliferation via inhibition of cell-cycle regulatory genes expression through the suppression of their promoter activities. Also required for LHB expression and ovarian maturation. Exacerbates CNS inflammation and demyelination upon cuprizone treatment. The polypeptide is Nuclear protein 1 (Rattus norvegicus (Rat)).